We begin with the raw amino-acid sequence, 159 residues long: Transmembrane protein 92 (159 aa).

Positions 1–26 are cleaved as a signal peptide; sequence MSQAWVPGLAPTLLFSLLAGPQKIAA. Residues 27–57 are Extracellular-facing; sequence KCGLILACPKGFKCCGDSCCQENELFPGPVR. A helical transmembrane segment spans residues 58–78; sequence IFVIIFLVILSVFCICGLAKC. The Cytoplasmic segment spans residues 79–159; the sequence is FCRNCREPEP…DQRGIDNPAF (81 aa). The interval 122–159 is disordered; sequence EVILKPSLGPTPTEPPPPYSFRPEEYTGDQRGIDNPAF.

The protein localises to the membrane. In Homo sapiens (Human), this protein is Transmembrane protein 92 (TMEM92).